The chain runs to 547 residues: CTP synthase (547 aa).

The interval 1–265 (MARYVFITGG…DQAVLDAFGI (265 aa)) is amidoligase domain. CTP is bound at residue Ser-13. Residue Ser-13 participates in UTP binding. ATP is bound by residues 14-19 (SLGKGL) and Asp-71. Mg(2+) is bound by residues Asp-71 and Glu-139. CTP is bound by residues 146–148 (DIE), 186–191 (KTKPTQ), and Lys-222. UTP contacts are provided by residues 186–191 (KTKPTQ) and Lys-222. In terms of domain architecture, Glutamine amidotransferase type-1 spans 291–546 (RVAIVGKYTQ…IRAAVEVSRL (256 aa)). Gly-353 is an L-glutamine binding site. Cys-380 acts as the Nucleophile; for glutamine hydrolysis in catalysis. L-glutamine-binding positions include 381 to 384 (LGMQ), Glu-404, and Arg-474. Active-site residues include His-519 and Glu-521.

Belongs to the CTP synthase family. As to quaternary structure, homotetramer.

It catalyses the reaction UTP + L-glutamine + ATP + H2O = CTP + L-glutamate + ADP + phosphate + 2 H(+). The enzyme catalyses L-glutamine + H2O = L-glutamate + NH4(+). The catalysed reaction is UTP + NH4(+) + ATP = CTP + ADP + phosphate + 2 H(+). It functions in the pathway pyrimidine metabolism; CTP biosynthesis via de novo pathway; CTP from UDP: step 2/2. Its activity is regulated as follows. Allosterically activated by GTP, when glutamine is the substrate; GTP has no effect on the reaction when ammonia is the substrate. The allosteric effector GTP functions by stabilizing the protein conformation that binds the tetrahedral intermediate(s) formed during glutamine hydrolysis. Inhibited by the product CTP, via allosteric rather than competitive inhibition. Functionally, catalyzes the ATP-dependent amination of UTP to CTP with either L-glutamine or ammonia as the source of nitrogen. Regulates intracellular CTP levels through interactions with the four ribonucleotide triphosphates. In Cereibacter sphaeroides (strain ATCC 17025 / ATH 2.4.3) (Rhodobacter sphaeroides), this protein is CTP synthase.